Consider the following 209-residue polypeptide: Probable phosphatidylglycerophosphatase, mitochondrial (209 aa).

Positions 57–61 (DKDNC) match the Phosphoryl acceptor motif.

Belongs to the GEP4 family.

It is found in the mitochondrion inner membrane. The enzyme catalyses a 1,2-diacyl-sn-glycero-3-phospho-(1'-sn-glycero-3'-phosphate) + H2O = a 1,2-diacyl-sn-glycero-3-phospho-(1'-sn-glycerol) + phosphate. The protein operates within phospholipid metabolism; phosphatidylglycerol biosynthesis; phosphatidylglycerol from CDP-diacylglycerol: step 2/2. Functionally, phosphatidylglycerophosphatase involved in the biosynthesis of cardiolipin (CL), a unique dimeric phosphoglycerolipid predominantly present in mitochondrial membranes and which has important functions for cellular energy metabolism, mitochondrial dynamics and the initiation of apoptotic pathways. The chain is Probable phosphatidylglycerophosphatase, mitochondrial (gep4) from Schizosaccharomyces pombe (strain 972 / ATCC 24843) (Fission yeast).